The sequence spans 448 residues: Rhodopsin (448 aa).

Residues 2–33 (GRDLRDNETWWYNPSIVVHPHWREFDQVPDAV) lie on the Extracellular side of the membrane. An N-linked (GlcNAc...) asparagine glycan is attached at N8. A helical membrane pass occupies residues 34–58 (YYSLGIFIGICGIIGCGGNGIVIYL). The Cytoplasmic segment spans residues 59-70 (FTKTKSLQTPAN). The helical transmembrane segment at 71–97 (MFIINLAFSDFTFSLVNGFPLMTISCF) threads the bilayer. Topologically, residues 98 to 109 (LKKWIFGFAACK) are extracellular. C108 and C186 are oxidised to a cystine. Residues 110–131 (VYGFIGGIFGFMSIMTMAMISI) form a helical membrane-spanning segment. Topologically, residues 132 to 151 (DRYNVIGRPMAASKKMSHRR) are cytoplasmic. A helical transmembrane segment spans residues 152-172 (AFIMIIFVWLWSVLWAIGPIF). Residues 173–199 (GWGAYTLEGVLCNCSFDYISRDSTTRS) lie on the Extracellular side of the membrane. Residues 200 to 224 (NILCMFILGFFGPILIIFFCYFNIV) form a helical membrane-spanning segment. The Cytoplasmic portion of the chain corresponds to 225-261 (MSVSNHEKEMAAMAKRLNAKELRKAQAGANAEMRLAK). Residues 262-283 (ISIVIVSQFLLSWSPYAVVALL) form a helical membrane-spanning segment. At 284–293 (AQFGPLEWVT) the chain is on the extracellular side. The chain crosses the membrane as a helical span at residues 294-315 (PYAAQLPVMFAKASAIHNPMIY). N6-(retinylidene)lysine is present on K305. Topologically, residues 316-448 (SVSHPKFREA…QGVDNQAYQA (133 aa)) are cytoplasmic. S-palmitoyl cysteine attachment occurs at residues C336 and C337. The span at 343–352 (ETEDDKDAET) shows a compositional bias: acidic residues. Positions 343 to 448 (ETEDDKDAET…QGVDNQAYQA (106 aa)) are disordered. The span at 359–391 (SSDAAPSADAAQMKEMMAMMQKMQQQQAAYPPQ) shows a compositional bias: low complexity. The span at 392–437 (GYAPPPQGYPPQGYPPQGYPPQGYPPQGYPPPPQGAPPQGAPPAAP) shows a compositional bias: pro residues.

This sequence belongs to the G-protein coupled receptor 1 family. Opsin subfamily. Post-translationally, contains one covalently linked retinal chromophore. Upon light absorption, the covalently bound 11-cis-retinal is converted to all-trans-retinal. After hydrolysis of the Schiff base and release of the covalently bound all-trans-retinal, active rhodopsin is regenerated by binding of a fresh molecule of 11-cis-retinal. In terms of tissue distribution, retina, rhabdomere membrane of photoreceptor cells (at protein level).

It is found in the cell projection. Its subcellular location is the rhabdomere membrane. Its function is as follows. Photoreceptor required for image-forming vision at low light intensity. Light-induced isomerization of 11-cis to all-trans retinal triggers a conformational change that activates signaling via G-proteins. Signaling mediates the activation of phospholipase C. Subsequent receptor phosphorylation mediates displacement of the bound G-protein alpha subunit by arrestin and terminates signaling. The sequence is that of Rhodopsin (RHO) from Todarodes pacificus (Japanese flying squid).